The chain runs to 204 residues: Glutathione S-transferase (204 aa).

In terms of domain architecture, GST N-terminal spans 3-80; it reads PSYKLTYCPV…YLGKQFGLSG (78 aa). Residues Y9, W40, K44, 50-52, and 64-65 contribute to the glutathione site; these read GKT and QS. A GST C-terminal domain is found at 82-204; it reads DDWENLEIDM…WVAKRPPTDL (123 aa).

This sequence belongs to the GST superfamily. Sigma family.

The catalysed reaction is RX + glutathione = an S-substituted glutathione + a halide anion + H(+). In Blattella germanica (German cockroach), this protein is Glutathione S-transferase.